The chain runs to 457 residues: Siroheme synthase (457 aa).

The precorrin-2 dehydrogenase /sirohydrochlorin ferrochelatase stretch occupies residues 1 to 204 (MDHLPIFCQL…ADEKAVNATT (204 aa)). NAD(+)-binding positions include 22 to 23 (DV) and 43 to 44 (LT). Ser-128 is modified (phosphoserine). The segment at 216–457 (GEVVLVGAGP…RDKLNWFSNY (242 aa)) is uroporphyrinogen-III C-methyltransferase. Residue Pro-225 coordinates S-adenosyl-L-methionine. The active-site Proton acceptor is the Asp-248. Residue Lys-270 is the Proton donor of the active site. S-adenosyl-L-methionine-binding positions include 301–303 (GGD), Ile-306, 331–332 (TA), Met-382, and Gly-411.

The protein in the N-terminal section; belongs to the precorrin-2 dehydrogenase / sirohydrochlorin ferrochelatase family. It in the C-terminal section; belongs to the precorrin methyltransferase family.

The enzyme catalyses uroporphyrinogen III + 2 S-adenosyl-L-methionine = precorrin-2 + 2 S-adenosyl-L-homocysteine + H(+). The catalysed reaction is precorrin-2 + NAD(+) = sirohydrochlorin + NADH + 2 H(+). It catalyses the reaction siroheme + 2 H(+) = sirohydrochlorin + Fe(2+). Its pathway is cofactor biosynthesis; adenosylcobalamin biosynthesis; precorrin-2 from uroporphyrinogen III: step 1/1. It participates in cofactor biosynthesis; adenosylcobalamin biosynthesis; sirohydrochlorin from precorrin-2: step 1/1. The protein operates within porphyrin-containing compound metabolism; siroheme biosynthesis; precorrin-2 from uroporphyrinogen III: step 1/1. It functions in the pathway porphyrin-containing compound metabolism; siroheme biosynthesis; siroheme from sirohydrochlorin: step 1/1. Its pathway is porphyrin-containing compound metabolism; siroheme biosynthesis; sirohydrochlorin from precorrin-2: step 1/1. In terms of biological role, multifunctional enzyme that catalyzes the SAM-dependent methylations of uroporphyrinogen III at position C-2 and C-7 to form precorrin-2 via precorrin-1. Then it catalyzes the NAD-dependent ring dehydrogenation of precorrin-2 to yield sirohydrochlorin. Finally, it catalyzes the ferrochelation of sirohydrochlorin to yield siroheme. This Salmonella dublin (strain CT_02021853) protein is Siroheme synthase.